A 243-amino-acid chain; its full sequence is 3-deoxy-manno-octulosonate cytidylyltransferase (243 aa).

It belongs to the KdsB family.

Its subcellular location is the cytoplasm. It catalyses the reaction 3-deoxy-alpha-D-manno-oct-2-ulosonate + CTP = CMP-3-deoxy-beta-D-manno-octulosonate + diphosphate. The protein operates within nucleotide-sugar biosynthesis; CMP-3-deoxy-D-manno-octulosonate biosynthesis; CMP-3-deoxy-D-manno-octulosonate from 3-deoxy-D-manno-octulosonate and CTP: step 1/1. Its pathway is bacterial outer membrane biogenesis; lipopolysaccharide biosynthesis. Activates KDO (a required 8-carbon sugar) for incorporation into bacterial lipopolysaccharide in Gram-negative bacteria. The protein is 3-deoxy-manno-octulosonate cytidylyltransferase of Helicobacter pylori (strain J99 / ATCC 700824) (Campylobacter pylori J99).